The primary structure comprises 660 residues: Bifunctional polymyxin resistance protein ArnA (660 aa).

The tract at residues Met1–Leu304 is formyltransferase ArnAFT. His86 to Ile88 serves as a coordination point for (6R)-10-formyltetrahydrofolate. The active-site Proton donor; for formyltransferase activity is the His104. Residues Arg114 and Val136 to Asp140 each bind (6R)-10-formyltetrahydrofolate. The tract at residues Arg314–Ser660 is dehydrogenase ArnADH. NAD(+) is bound by residues Asp347 and Asp368 to Ile369. UDP-alpha-D-glucuronate is bound by residues Ala393, Tyr398, and Thr432–Ser433. Glu434 serves as the catalytic Proton acceptor; for decarboxylase activity. UDP-alpha-D-glucuronate contacts are provided by residues Arg460, Asn492, Lys526–Arg535, and Tyr613. Catalysis depends on Arg619, which acts as the Proton donor; for decarboxylase activity.

The protein in the N-terminal section; belongs to the Fmt family. UDP-L-Ara4N formyltransferase subfamily. In the C-terminal section; belongs to the NAD(P)-dependent epimerase/dehydratase family. UDP-glucuronic acid decarboxylase subfamily. In terms of assembly, homohexamer, formed by a dimer of trimers.

The catalysed reaction is UDP-alpha-D-glucuronate + NAD(+) = UDP-beta-L-threo-pentopyranos-4-ulose + CO2 + NADH. It catalyses the reaction UDP-4-amino-4-deoxy-beta-L-arabinose + (6R)-10-formyltetrahydrofolate = UDP-4-deoxy-4-formamido-beta-L-arabinose + (6S)-5,6,7,8-tetrahydrofolate + H(+). It functions in the pathway nucleotide-sugar biosynthesis; UDP-4-deoxy-4-formamido-beta-L-arabinose biosynthesis; UDP-4-deoxy-4-formamido-beta-L-arabinose from UDP-alpha-D-glucuronate: step 1/3. It participates in nucleotide-sugar biosynthesis; UDP-4-deoxy-4-formamido-beta-L-arabinose biosynthesis; UDP-4-deoxy-4-formamido-beta-L-arabinose from UDP-alpha-D-glucuronate: step 3/3. The protein operates within bacterial outer membrane biogenesis; lipopolysaccharide biosynthesis. Its function is as follows. Bifunctional enzyme that catalyzes the oxidative decarboxylation of UDP-glucuronic acid (UDP-GlcUA) to UDP-4-keto-arabinose (UDP-Ara4O) and the addition of a formyl group to UDP-4-amino-4-deoxy-L-arabinose (UDP-L-Ara4N) to form UDP-L-4-formamido-arabinose (UDP-L-Ara4FN). The modified arabinose is attached to lipid A and is required for resistance to polymyxin and cationic antimicrobial peptides. The sequence is that of Bifunctional polymyxin resistance protein ArnA from Shigella boydii serotype 4 (strain Sb227).